The chain runs to 280 residues: 2-C-methyl-D-erythritol 4-phosphate cytidylyltransferase (280 aa).

It belongs to the IspD/TarI cytidylyltransferase family. IspD subfamily.

The catalysed reaction is 2-C-methyl-D-erythritol 4-phosphate + CTP + H(+) = 4-CDP-2-C-methyl-D-erythritol + diphosphate. It functions in the pathway isoprenoid biosynthesis; isopentenyl diphosphate biosynthesis via DXP pathway; isopentenyl diphosphate from 1-deoxy-D-xylulose 5-phosphate: step 2/6. Catalyzes the formation of 4-diphosphocytidyl-2-C-methyl-D-erythritol from CTP and 2-C-methyl-D-erythritol 4-phosphate (MEP). The polypeptide is 2-C-methyl-D-erythritol 4-phosphate cytidylyltransferase (Psychrobacter cryohalolentis (strain ATCC BAA-1226 / DSM 17306 / VKM B-2378 / K5)).